The following is a 974-amino-acid chain: Apical junction component 1 homolog (974 aa).

3 disordered regions span residues 23–137 (PGLT…PSYP), 201–233 (ARSS…PRHV), and 306–326 (CSRP…GGSY). Ser-52 carries the phosphoserine modification. A compositionally biased stretch (pro residues) spans 69 to 79 (EPPPPEPAPPR). Over residues 116-134 (RGREAQRAVRVEGSPRREP) the composition is skewed to basic and acidic residues. Residue Ser-129 is modified to Phosphoserine. Polar residues predominate over residues 201–216 (ARSSRSCAPRETTSWA). The residue at position 322 (Arg-322) is an Omega-N-methylarginine. Ser-468, Ser-509, and Ser-512 each carry phosphoserine. The tract at residues 539-576 (DLRSVDRPTAKGWELPGGRPRQPVSTVPEGPASSRQRS) is disordered. Ser-593 is modified (phosphoserine). The interval 618-661 (AGPGGATLLAPSRSPPASAGSTEEPTGSGEAADASPEPSADEDD) is disordered. Residues 623 to 636 (ATLLAPSRSPPASA) are compositionally biased toward low complexity. Residue Arg-749 is modified to Asymmetric dimethylarginine; alternate. At Arg-749 the chain carries Omega-N-methylarginine; alternate.

Its subcellular location is the apical cell membrane. The protein resides in the cell projection. It is found in the cilium. The protein localises to the cell junction. It localises to the adherens junction. In terms of biological role, may be involved in the control of adherens junction integrity. This Mus musculus (Mouse) protein is Apical junction component 1 homolog (Ajm1).